A 73-amino-acid polypeptide reads, in one-letter code: V-type proton ATPase subunit e (73 aa).

Over 1–3 the chain is Lumenal; the sequence is MSS. A helical membrane pass occupies residues 4 to 24; that stretch reads FYTVVGVFIVVSAMSVLFWIM. Topologically, residues 25 to 35 are cytoplasmic; sequence APKNNQAVWRS. A helical membrane pass occupies residues 36–56; the sequence is TVILTLAMMFLMWAITFLCQL. Over 57–73 the chain is Lumenal; that stretch reads HPLVAPRRSDLRPEFAE.

It belongs to the V-ATPase e1/e2 subunit family. In terms of assembly, V-ATPase is a heteromultimeric enzyme composed of a peripheral catalytic V1 complex (components A to H) attached to an integral membrane V0 proton pore complex (components: a, c, c', c'', d, e, f and VOA1).

It localises to the vacuole membrane. Subunit of the V0 complex of vacuolar(H+)-ATPase (V-ATPase), a multisubunit enzyme composed of a peripheral complex (V1) that hydrolyzes ATP and a membrane integral complex (V0) that translocates protons. V-ATPase is responsible for acidifying and maintaining the pH of intracellular compartments. The polypeptide is V-type proton ATPase subunit e (VMA9) (Saccharomyces cerevisiae (strain ATCC 204508 / S288c) (Baker's yeast)).